Reading from the N-terminus, the 377-residue chain is Nitric oxide reductase FlRd-NAD(+) reductase (377 aa).

The protein belongs to the FAD-dependent oxidoreductase family. FAD is required as a cofactor.

The protein resides in the cytoplasm. The catalysed reaction is 2 reduced [nitric oxide reductase rubredoxin domain] + NAD(+) + H(+) = 2 oxidized [nitric oxide reductase rubredoxin domain] + NADH. Its pathway is nitrogen metabolism; nitric oxide reduction. Its function is as follows. One of at least two accessory proteins for anaerobic nitric oxide (NO) reductase. Reduces the rubredoxin moiety of NO reductase. This Shigella flexneri serotype 5b (strain 8401) protein is Nitric oxide reductase FlRd-NAD(+) reductase.